Reading from the N-terminus, the 484-residue chain is Nuclear rim protein 1 (484 aa).

At Ser3 the chain carries Phosphoserine. Helical transmembrane passes span 145 to 165 (FTIF…MFGY) and 252 to 272 (TAIV…AIVF). The disordered stretch occupies residues 416–458 (SSNENLEKGGAFLPNQDQNRPSKSLSPLRKTPLSARQKRFEGS). At Ser417 the chain carries Phosphoserine. Residues 430–440 (NQDQNRPSKSL) show a composition bias toward polar residues. Ser474 is modified (phosphoserine).

This sequence belongs to the NUR1 family. In terms of assembly, interacts with CSM1.

Its subcellular location is the nucleus membrane. In terms of biological role, member of a perinuclear network that controls recombination at multiple loci to maintain genome stability. Required for rDNA repeat stability. The polypeptide is Nuclear rim protein 1 (NUR1) (Saccharomyces cerevisiae (strain YJM789) (Baker's yeast)).